A 943-amino-acid chain; its full sequence is MLKLLLGDPNTRKLKRYQPIVEEINLLEEEVSILTDDELRNETHNLKSKVSLEINIKRQNEKLEEILPKAFAIVREASKRVLEMRHFDVQLIGGMVLHEGQIAEMKTGEGKTLVATLPCYLNALTGKGVHVVTVNDYLARRDAEWMGQVHRFLGLSVGLIQQDMSPAERKKNYACDITYATNSELGFDYLRDNMATEIEEVVQRKFNYCVIDEVDSILIDEARTPLIISGQIERPQEKYQKAAELALSLIKAKELSKDGIDPEGDYEVDEKQRSCILTDQGFAKCEESLKVNDLYDPQDPWAHYITNALKAKELFVKDVNYIIKKDEAVIVDEFTGRVMPGRRWSDGQHQAIEAKEGLKIQPETQTLASITYQNFFLLYPGLAGMTGTAKTEEVEFEKTYKLESTVVPTNQVRKRQDWADQVFKTEIGKWKAVANETAEIHRNGRPVLVGTTSVEKSELLSSLLFEQQIPHNLLNAKPENVEREAEIVAQAGRSGAVTIATNMAGRGTDIILGGNSDYMARLKLKETLMPLLVKPDNEHKPPIPQQRSSKAGGGFASKSESISNKNSKSSGASLFPCQLGEDTTRKLSLLSNELVKSWGERTLTILELDDRIATAAEKAPTEDKLIQSLRDALSDVKNEYEKVLVHEEENVRKAGGLHVIGTERHESRRVDNQLRGRAGRQGDLGSTRFFLSLEDNLLRIFGGDRVANLMNAFRVDEDMPIESGMLTRSLESAQKKVETYYYDIRKQVFEYDEVMNNQRKAVYNERLRVLKGSDLKKQVLGYGDRTMEEIVEAYINPDLPPEEWDIEQLISKVKEFIYLLNNLKSTDVSVLSVEELKNYLQEQLRIAYDLKEAQIEQFRPGLMREAERFFILQQIDNLWREHLQSMDSLRESVGLRGYGQKDPLIEYKNEGYDMFLEMMTNMRRNVIYSMFMFQPQSEKETKS.

Residues Q90, 108-112 (GEGKT), and D509 contribute to the ATP site. The interval 534–576 (KPDNEHKPPIPQQRSSKAGGGFASKSESISNKNSKSSGASLFP) is disordered. Over residues 556 to 570 (ASKSESISNKNSKSS) the composition is skewed to low complexity.

The protein belongs to the SecA family. Monomer and homodimer. Part of the essential Sec protein translocation apparatus which comprises SecA, SecYEG and auxiliary proteins SecDF. Other proteins may also be involved.

The protein resides in the cell inner membrane. The protein localises to the cellular thylakoid membrane. It is found in the cytoplasm. It catalyses the reaction ATP + H2O + cellular proteinSide 1 = ADP + phosphate + cellular proteinSide 2.. Functionally, part of the Sec protein translocase complex. Interacts with the SecYEG preprotein conducting channel. Has a central role in coupling the hydrolysis of ATP to the transfer of proteins into and across the cell membrane, serving as an ATP-driven molecular motor driving the stepwise translocation of polypeptide chains across the membrane. Probably participates in protein translocation into and across both the cytoplasmic and thylakoid membranes in cyanobacterial cells. This is Protein translocase subunit SecA from Prochlorococcus marinus (strain MIT 9515).